Reading from the N-terminus, the 120-residue chain is Large ribosomal subunit protein uL18 (120 aa).

The protein belongs to the universal ribosomal protein uL18 family. Part of the 50S ribosomal subunit; part of the 5S rRNA/L5/L18/L25 subcomplex. Contacts the 5S and 23S rRNAs.

Its function is as follows. This is one of the proteins that bind and probably mediate the attachment of the 5S RNA into the large ribosomal subunit, where it forms part of the central protuberance. In Agrobacterium fabrum (strain C58 / ATCC 33970) (Agrobacterium tumefaciens (strain C58)), this protein is Large ribosomal subunit protein uL18.